Reading from the N-terminus, the 208-residue chain is Guanylate kinase (208 aa).

The 181-residue stretch at 4–184 folds into the Guanylate kinase-like domain; the sequence is GTLYIVSAPS…ALMDFKAIIR (181 aa). An ATP-binding site is contributed by 11–18; it reads APSGAGKS.

It belongs to the guanylate kinase family.

The protein resides in the cytoplasm. The catalysed reaction is GMP + ATP = GDP + ADP. Functionally, essential for recycling GMP and indirectly, cGMP. The chain is Guanylate kinase from Photobacterium profundum (strain SS9).